Reading from the N-terminus, the 249-residue chain is DNA repair protein RecO (249 aa).

It belongs to the RecO family.

Functionally, involved in DNA repair and RecF pathway recombination. The chain is DNA repair protein RecO from Polaromonas sp. (strain JS666 / ATCC BAA-500).